The following is a 486-amino-acid chain: Glutamyl-tRNA(Gln) amidotransferase subunit A (486 aa).

Active-site charge relay system residues include Lys-75 and Ser-150. The Acyl-ester intermediate role is filled by Ser-174.

It belongs to the amidase family. GatA subfamily. Heterotrimer of A, B and C subunits.

The enzyme catalyses L-glutamyl-tRNA(Gln) + L-glutamine + ATP + H2O = L-glutaminyl-tRNA(Gln) + L-glutamate + ADP + phosphate + H(+). Its function is as follows. Allows the formation of correctly charged Gln-tRNA(Gln) through the transamidation of misacylated Glu-tRNA(Gln) in organisms which lack glutaminyl-tRNA synthetase. The reaction takes place in the presence of glutamine and ATP through an activated gamma-phospho-Glu-tRNA(Gln). This is Glutamyl-tRNA(Gln) amidotransferase subunit A from Nostoc sp. (strain PCC 7120 / SAG 25.82 / UTEX 2576).